The following is a 366-amino-acid chain: Lysophosphatidic acid receptor 1-B (366 aa).

At 1–52 (MTSLSEFVSEPIGMMSQTSAASESQCYYNETIAFFYNRSGKYLDTEWNAVSK) the chain is on the extracellular side. Intrachain disulfides connect Cys26/Cys192 and Cys190/Cys197. 2 N-linked (GlcNAc...) asparagine glycosylation sites follow: Asn29 and Asn37. Residue Lys41 coordinates a 1-acyl-sn-glycero-3-phosphate. The chain crosses the membrane as a helical span at residues 53–77 (LVMGLGITVCIFIMLANLLVMVAIY). Residues 78–85 (VNRRFHFP) are Cytoplasmic-facing. The helical transmembrane segment at 86–109 (IYYLMANLAAADFFAGLAYFYLMF) threads the bilayer. Residues 110 to 123 (NTGPNTRRLTVSTW) lie on the Extracellular side of the membrane. The chain crosses the membrane as a helical span at residues 124-146 (LLRQGLIDTSLTASVANLLAIAI). 126 to 131 (RQGLID) lines the a 1-acyl-sn-glycero-3-phosphate pocket. Over 147–165 (ERHITVFRMQLHTRMSNRR) the chain is Cytoplasmic. The chain crosses the membrane as a helical span at residues 166 to 186 (VVVVIVVIWTVAIVMGAIPSV). At 187-206 (GWNCICDLEHCSNMAPLYSD) the chain is on the extracellular side. The helical transmembrane segment at 207-227 (SYLIFWTIFNLVTFVVMVVLY) threads the bilayer. Trp212 provides a ligand contact to a 1-acyl-sn-glycero-3-phosphate. The Cytoplasmic portion of the chain corresponds to 228 to 257 (AHIFVYVRQRTMRMSRHSSGPRRNRDTMMS). Residues 258 to 282 (LLKTVVIVLGAFIVCWTPGLVLLLL) traverse the membrane as a helical segment. The Extracellular portion of the chain corresponds to 283–296 (DVCCPQCNILAYEK). A disulfide bridge links Cys286 with Cys289. Residues 297–317 (FFLLLAEFNSAMNPIIYSYRD) form a helical membrane-spanning segment. The Cytoplasmic segment spans residues 318–366 (KEMSATFKQILCCQRTENVNGPTEGSDRSASSLNHTILAGVHSNDHSVV).

This sequence belongs to the G-protein coupled receptor 1 family. In terms of tissue distribution, expressed at high levels in oocytes and at lower levels in brain and spinal cord. Below detection level in lung, heart, kidney, liver, muscle, stomach, and intestine.

The protein resides in the cell surface. It localises to the cell membrane. It is found in the endosome. Receptor for lysophosphatidic acid (LPA). Plays a role in the reorganization of the actin cytoskeleton, cell migration, differentiation and proliferation, and thereby contributes to the responses to tissue damage and infectious agents. Activates downstream signaling cascades via the G(i)/G(o), G(12)/G(13), and G(q) families of heteromeric G proteins. Signaling inhibits adenylyl cyclase activity and decreases cellular cAMP levels. Signaling triggers an increase of cytoplasmic Ca(2+) levels. Signaling leads to the activation of phospholipase C (PLC) and the formation of inositol 1,4,5-trisphosphate. Signaling mediates activation of down-stream MAP kinases. Contributes to the regulation of cell shape. Promotes Rho-dependent reorganization of the actin cytoskeleton in neuronal cells and neurite retraction. Promotes the activation of Rho and the formation of actin stress fibers. Promotes formation of lamellipodia at the leading edge of migrating cells via activation of Rac. Through its function as lysophosphatidic acid receptor, plays a role in chemotaxis and cell migration, including responses to injury and wounding. Promotes cell proliferation in response to lysophosphatidic acid. This is Lysophosphatidic acid receptor 1-B (lpar1-b) from Xenopus laevis (African clawed frog).